We begin with the raw amino-acid sequence, 212 residues long: MSEETKDNQRLQRPAPRLNERILSSLSRRSVAAHPWHDLEIGPGAPQIFNVVVEITKGSKVKYELDKKTGLIKVDRILYSSVVYPHNYGFVPRTLCEDNDPIDVLVIMQEPVLPGCFLRARAIGLMPMIDQGEKDDKIIAVCVDDPEYKHYTDIKELPPHRLSEIRRFFEDYKKNENKEVAVNDFLPSESAVEAIQYSMDLYAEYILHTLRR.

Substrate-binding residues include Lys-62 and Arg-76. Catalysis depends on Tyr-84, which acts as the Proton donor. Substrate is bound at residue Tyr-88. Positions 98, 103, and 135 each coordinate Mg(2+). Substrate is bound at residue Tyr-172.

It belongs to the PPase family. Monomer. Mg(2+) serves as cofactor. In terms of tissue distribution, ubiquitous. Lower level of expression in ovary, stigma and pollen.

It localises to the cytoplasm. It catalyses the reaction diphosphate + H2O = 2 phosphate + H(+). Its activity is regulated as follows. Inhibited by Zn(2+), Ca(2+), Ba(2+), Fe(2+), Co(2+), Cu(2+), Eu(2+), Eu(3+) and Mn(2+). Functionally, catalyzes the irreversible hydrolysis of pyrophosphate (PPi) to phosphate. The MgPPi(2-) complex binds to the enzyme only after a free Mg(2+) ion has bound. No activity with glycerol-3-phosphate, glucose-6-phosphate, p-nitrophenylphosphate, ADP, NADP(+), NAD(+),NADH, NADPH or phosphoribosyl pyrophosphate as substrates. Controls the equilibrium of gluconeogenic reactions in the heterotrophic growth phase of early seedling establishment. Determinates the rate of cytosolic glycolysis, providing carbon for seed storage lipid accumulation. The sequence is that of Soluble inorganic pyrophosphatase 1 from Arabidopsis thaliana (Mouse-ear cress).